The chain runs to 135 residues: uncharacterized protein (135 aa).

The next 3 membrane-spanning stretches (helical) occupy residues Ile12 to Ile32, Ser68 to Cys88, and Gly98 to Phe118.

It localises to the cell membrane. This is an uncharacterized protein from Methanocaldococcus jannaschii (strain ATCC 43067 / DSM 2661 / JAL-1 / JCM 10045 / NBRC 100440) (Methanococcus jannaschii).